The chain runs to 535 residues: High affinity immunoglobulin alpha and immunoglobulin mu Fc receptor (535 aa).

Residues 1–35 (MDQGAPAKPSEQKVPSLRTRWEILLLTLCLLHGSS) form the signal peptide. Residues 36–455 (MTPPHRRSHS…ALMEGESHTR (420 aa)) are Extracellular-facing. The mediates immunoglobulin Fc fragment-binding stretch occupies residues 95 to 117 (GGAVTIHCHYAPSSVNRHQRKYW). Residues 95–189 (GGAVTIHCHY…DMLFFSVNLT (95 aa)) enclose the Ig-like V-type domain. An intrachain disulfide couples Cys102 to Cys173. Asn187 carries an N-linked (GlcNAc...) asparagine glycan. Disordered stretches follow at residues 201–360 (AAPA…LISE) and 405–430 (EGRS…QLSV). 2 stretches are compositionally biased toward low complexity: residues 208–220 (PTTA…SSAG) and 241–253 (TVPT…TTSS). Residues 291–328 (KSRSMSSTTQGVWLWSTRNSVTPSVTTSEGRRQGTTPE) show a composition bias toward polar residues. Over residues 330–346 (DGPRDETDVRVSPEAPR) the composition is skewed to basic and acidic residues. A compositionally biased stretch (polar residues) spans 413–429 (LENTTEESSPPTPSQLS). Residues 456 to 476 (ILTPVSTVLALLLIAALILLK) traverse the membrane as a helical segment. Over 477–535 (RSLGRQRTSQKKERVPRITLIQMTHFLPDKLPDEGKNFQQSNLLPPQASLTVLENDPRP) the chain is Cytoplasmic. The interval 507-535 (LPDEGKNFQQSNLLPPQASLTVLENDPRP) is disordered. Polar residues predominate over residues 513-528 (NFQQSNLLPPQASLTV).

In terms of assembly, interacts with IGHM; this interaction facilitates the endocytosis of IgM-coated microbes and IgM-antigen immune complexes. Post-translationally, N-glycosylated. Expressed in several tissues including thymus, spleen, liver, kidney, small and large intestine, testis and placenta. Expressed by oligodendrocytes, B-cells and macrophages but not granulocytes, T-cells or NK cells (at protein level).

The protein localises to the cell membrane. Its function is as follows. Functions as a receptor for the Fc fragment of IgA and IgM. Binds IgA and IgM with high affinity and mediates their endocytosis. May function in the immune response to microbes mediated by IgA and IgM. The chain is High affinity immunoglobulin alpha and immunoglobulin mu Fc receptor (Fcamr) from Mus musculus (Mouse).